Here is a 153-residue protein sequence, read N- to C-terminus: Ribonuclease H (153 aa).

Residues 1-142 form the RNase H type-1 domain; it reads MRKKIEIFTD…CDELARIAAE (142 aa). Mg(2+) is bound by residues Asp-10, Glu-48, Asp-70, and Asp-134.

This sequence belongs to the RNase H family. As to quaternary structure, monomer. The cofactor is Mg(2+).

Its subcellular location is the cytoplasm. The catalysed reaction is Endonucleolytic cleavage to 5'-phosphomonoester.. In terms of biological role, endonuclease that specifically degrades the RNA of RNA-DNA hybrids. The polypeptide is Ribonuclease H (Baumannia cicadellinicola subsp. Homalodisca coagulata).